The following is a 296-amino-acid chain: NADH-cytochrome b5 reductase 1 (296 aa).

A helical membrane pass occupies residues 11–31 (LSAVLVKFAPFAVAVIAILAA). An FAD-binding FR-type domain is found at 47-152 (SEFQNFVLKE…RGPKGAMVYT (106 aa)). FAD-binding positions include 132–147 (TTLKIGDTLKVRGPKG) and 158–195 (HIGMIAGGTGITPMLQIIKAIIRNRPRNGGNDTTKIDL).

The protein belongs to the flavoprotein pyridine nucleotide cytochrome reductase family. As to quaternary structure, monomer. Component of the 2-(3-amino-3-carboxypropyl)histidine synthase complex composed of dph1, dph2, dph3 and a NADH-dependent reductase, predominantly cbr1. The cofactor is FAD.

It localises to the mitochondrion outer membrane. The enzyme catalyses 2 Fe(III)-[cytochrome b5] + NADH = 2 Fe(II)-[cytochrome b5] + NAD(+) + H(+). The catalysed reaction is 2 Fe(3+)-[Dph3] + NADH = 2 Fe(2+)-[Dph3] + NAD(+) + H(+). It participates in protein modification; peptidyl-diphthamide biosynthesis. Functionally, NADH-dependent reductase for dph3 and cytochrome b5. Required for the first step of diphthamide biosynthesis, a post-translational modification of histidine which occurs in elongation factor 2. Dph1 and dph2 transfer a 3-amino-3-carboxypropyl (ACP) group from S-adenosyl-L-methionine (SAM) to a histidine residue, the reaction is assisted by a reduction system comprising dph3 and a NADH-dependent reductase, predominantly cbr1. By reducing dph3, also involved in the formation of the tRNA wobble base modification mcm5s 2U (5-methoxycarbonylmethyl-2-thiouridine), mediated by the elongator complex. The cytochrome b5/NADH cytochrome b5 reductase electron transfer system supports the catalytic activity of several sterol biosynthetic enzymes. This is NADH-cytochrome b5 reductase 1 (cbr1) from Aspergillus terreus (strain NIH 2624 / FGSC A1156).